The chain runs to 441 residues: Zinc finger protein ZIC 3 (441 aa).

A C2H2-type 1; atypical zinc finger spans residues 222-257 (LSCKWLEESPMNRPQKTCDRTFSSMHELVTHMTMEH). The segment at 266–293 (HICYWEECPRGGKSFKAKYKLVNHIRVH) adopts a C2H2-type 2; atypical zinc-finger fold. C2H2-type zinc fingers lie at residues 299 to 323 (FPCPFPGCGKIFARSENLKIHKRTH), 329 to 353 (FKCEFEGCDRRFANSSDRKKHMHVH), and 359 to 381 (YICKVCDKSYTHPSSLRKHMKVH). The segment at 375–441 (RKHMKVHESQ…LPPNFNEWYV (67 aa)) is disordered. Residues 383–399 (SQGSDSSPAASSGYESA) show a composition bias toward low complexity. The segment covering 406–429 (SANSEEPSKNSSATHQTNNSSHNT) has biased composition (polar residues).

The protein belongs to the GLI C2H2-type zinc-finger protein family.

It localises to the nucleus. Its subcellular location is the cytoplasm. In terms of biological role, probably acts as a transcriptional activator. May bind to the minimal GLI-consensus sequence 5'-GGGTGGTC-3'. Can determine the ectodermal cell fate and promote the earliest step of neural and neural crest development. Involved in establishing left-right asymmetry in the embryo. In Xenopus tropicalis (Western clawed frog), this protein is Zinc finger protein ZIC 3 (zic3).